The chain runs to 545 residues: CTP synthase (545 aa).

The amidoligase domain stretch occupies residues 1–265 (MSKYIFVTGG…DDLVVQNLGL (265 aa)). CTP is bound at residue serine 13. Residue serine 13 participates in UTP binding. ATP contacts are provided by residues 14 to 19 (SLGKGA) and aspartate 71. Residues aspartate 71 and glutamate 139 each contribute to the Mg(2+) site. Residues 146-148 (DIE), 186-191 (KTKPTQ), and lysine 222 each bind CTP. Residues 186 to 191 (KTKPTQ) and lysine 222 each bind UTP. The 252-residue stretch at 290–541 (VIALVGKYVG…MRAAIAQRER (252 aa)) folds into the Glutamine amidotransferase type-1 domain. Glycine 351 is a binding site for L-glutamine. Cysteine 378 serves as the catalytic Nucleophile; for glutamine hydrolysis. L-glutamine-binding positions include 379–382 (LGMQ), glutamate 402, and arginine 469. Catalysis depends on residues histidine 514 and glutamate 516.

Belongs to the CTP synthase family. As to quaternary structure, homotetramer.

The enzyme catalyses UTP + L-glutamine + ATP + H2O = CTP + L-glutamate + ADP + phosphate + 2 H(+). It catalyses the reaction L-glutamine + H2O = L-glutamate + NH4(+). The catalysed reaction is UTP + NH4(+) + ATP = CTP + ADP + phosphate + 2 H(+). The protein operates within pyrimidine metabolism; CTP biosynthesis via de novo pathway; CTP from UDP: step 2/2. Allosterically activated by GTP, when glutamine is the substrate; GTP has no effect on the reaction when ammonia is the substrate. The allosteric effector GTP functions by stabilizing the protein conformation that binds the tetrahedral intermediate(s) formed during glutamine hydrolysis. Inhibited by the product CTP, via allosteric rather than competitive inhibition. In terms of biological role, catalyzes the ATP-dependent amination of UTP to CTP with either L-glutamine or ammonia as the source of nitrogen. Regulates intracellular CTP levels through interactions with the four ribonucleotide triphosphates. This is CTP synthase from Acidithiobacillus ferrooxidans (strain ATCC 23270 / DSM 14882 / CIP 104768 / NCIMB 8455) (Ferrobacillus ferrooxidans (strain ATCC 23270)).